A 665-amino-acid chain; its full sequence is Pentatricopeptide repeat-containing protein At1g04840 (665 aa).

11 PPR repeats span residues 90–124 (NPFV…GVKP), 125–155 (DRLT…TLKN), 160–190 (DSFV…SPDR), 195–229 (SILI…NSGS), 230–256 (WSTL…MPEK), 257–291 (NVVS…GLKP), 292–326 (NEYT…GIKL), 327–357 (DRAI…MNHK), 358–392 (DILS…GEKP), 393–423 (DEVV…MRLD), and 429–459 (TLKH…MPIN). Positions 464–539 (TWAALYRACK…SLGWSYIELD (76 aa)) are type E motif. The tract at residues 540–570 (GQLNKFSAGDYSHKLTQEIGLKLDEIISLAI) is type E(+) motif. The segment at 571 to 665 (QKGYNPGADW…DGRCSCGDYW (95 aa)) is type DYW motif.

The protein belongs to the PPR family. PCMP-H subfamily.

This Arabidopsis thaliana (Mouse-ear cress) protein is Pentatricopeptide repeat-containing protein At1g04840 (PCMP-H64).